The chain runs to 675 residues: DNA ligase (675 aa).

NAD(+)-binding positions include 34-38 (DYAFD), 83-84 (SL), and E117. K119 functions as the N6-AMP-lysine intermediate in the catalytic mechanism. 4 residues coordinate NAD(+): R140, E184, K297, and K321. Zn(2+)-binding residues include C415, C418, C433, and C439. The region spanning 598–675 (LVNRNFEGMK…GEEEFEAMLF (78 aa)) is the BRCT domain.

It belongs to the NAD-dependent DNA ligase family. LigA subfamily. The cofactor is Mg(2+). It depends on Mn(2+) as a cofactor.

The catalysed reaction is NAD(+) + (deoxyribonucleotide)n-3'-hydroxyl + 5'-phospho-(deoxyribonucleotide)m = (deoxyribonucleotide)n+m + AMP + beta-nicotinamide D-nucleotide.. Its function is as follows. DNA ligase that catalyzes the formation of phosphodiester linkages between 5'-phosphoryl and 3'-hydroxyl groups in double-stranded DNA using NAD as a coenzyme and as the energy source for the reaction. It is essential for DNA replication and repair of damaged DNA. The sequence is that of DNA ligase from Prosthecochloris aestuarii (strain DSM 271 / SK 413).